The primary structure comprises 122 residues: Large ribosomal subunit protein uL14 (122 aa).

It belongs to the universal ribosomal protein uL14 family. As to quaternary structure, part of the 50S ribosomal subunit. Forms a cluster with proteins L3 and L19. In the 70S ribosome, L14 and L19 interact and together make contacts with the 16S rRNA in bridges B5 and B8.

Binds to 23S rRNA. Forms part of two intersubunit bridges in the 70S ribosome. In Lactobacillus delbrueckii subsp. bulgaricus (strain ATCC BAA-365 / Lb-18), this protein is Large ribosomal subunit protein uL14.